The chain runs to 276 residues: Undecaprenyl-diphosphatase (276 aa).

Helical transmembrane passes span 43–63, 85–105, 109–129, 183–203, 214–234, and 249–269; these read RAMA…VWEF, GNLL…ADLI, LFNP…MLWA, AATE…AVYS, GDLP…MIAV, and FAWY…FGWV.

It belongs to the UppP family.

Its subcellular location is the cell inner membrane. It carries out the reaction di-trans,octa-cis-undecaprenyl diphosphate + H2O = di-trans,octa-cis-undecaprenyl phosphate + phosphate + H(+). Its function is as follows. Catalyzes the dephosphorylation of undecaprenyl diphosphate (UPP). Confers resistance to bacitracin. This is Undecaprenyl-diphosphatase from Pseudomonas putida (strain ATCC 700007 / DSM 6899 / JCM 31910 / BCRC 17059 / LMG 24140 / F1).